The sequence spans 182 residues: Molybdopterin synthase catalytic subunit (182 aa).

Substrate is bound by residues 119-120, lysine 135, and 142-144; these read HR and KRE. Positions 152–182 are disordered; it reads VWRANRDGAPGQRIDTAEPAVGAGSGGEIDD.

It belongs to the MoaE family. MOCS2B subfamily. In terms of assembly, heterotetramer; composed of 2 small (MOCS2A) and 2 large (MOCS2B) subunits.

Its subcellular location is the cytoplasm. It catalyses the reaction 2 [molybdopterin-synthase sulfur-carrier protein]-C-terminal-Gly-aminoethanethioate + cyclic pyranopterin phosphate + H2O = molybdopterin + 2 [molybdopterin-synthase sulfur-carrier protein]-C-terminal Gly-Gly + 2 H(+). The protein operates within cofactor biosynthesis; molybdopterin biosynthesis. Its function is as follows. Catalytic subunit of the molybdopterin synthase complex, a complex that catalyzes the conversion of precursor Z into molybdopterin. Acts by mediating the incorporation of 2 sulfur atoms from thiocarboxylated MOCS2A into precursor Z to generate a dithiolene group. This Pyricularia oryzae (strain 70-15 / ATCC MYA-4617 / FGSC 8958) (Rice blast fungus) protein is Molybdopterin synthase catalytic subunit.